The following is a 499-amino-acid chain: 2,3-bisphosphoglycerate-independent phosphoglycerate mutase (499 aa).

2 residues coordinate Mn(2+): aspartate 10 and serine 60. The active-site Phosphoserine intermediate is the serine 60. Residues histidine 121, 151 to 152, arginine 182, arginine 188, 253 to 256, and lysine 326 contribute to the substrate site; these read RD and RPDR. Positions 391, 395, 434, 435, and 452 each coordinate Mn(2+).

Belongs to the BPG-independent phosphoglycerate mutase family. As to quaternary structure, monomer. The cofactor is Mn(2+).

The catalysed reaction is (2R)-2-phosphoglycerate = (2R)-3-phosphoglycerate. The protein operates within carbohydrate degradation; glycolysis; pyruvate from D-glyceraldehyde 3-phosphate: step 3/5. In terms of biological role, catalyzes the interconversion of 2-phosphoglycerate and 3-phosphoglycerate. The sequence is that of 2,3-bisphosphoglycerate-independent phosphoglycerate mutase from Metamycoplasma hominis (strain ATCC 23114 / DSM 25592 / NBRC 14850 / NCTC 10111 / PG21) (Mycoplasma hominis).